The primary structure comprises 329 residues: Ubiquitin carboxyl-terminal hydrolase isozyme L5 (329 aa).

Positions 7 to 225 constitute a UCH catalytic domain; it reads EWCLMESDPG…IRFNLMAIVS (219 aa). K47 carries the post-translational modification N6-succinyllysine. The active-site Nucleophile is the C88. An N6-acetyllysine modification is found at K158. The active-site Proton donor is H164. At K289 the chain carries N6-succinyllysine. The region spanning 291 to 319 is the ULD domain; the sequence is NYLPFIMELLKTLAEHQQLIPLVEKAKEK. The interaction with ADRM1 stretch occupies residues 313-329; the sequence is VEKAKEKQNAKKAQETK.

It belongs to the peptidase C12 family. In terms of assembly, component of the 19S (PA700) regulatory complex of the 26S proteasome. Interacts with ADRM1 and NFRKB; in vitro ADRM1 and NFRKB compete for interaction with UCHL5. Component of the INO80 complex; specifically part of a complex module associated with N-terminus of INO80.

It is found in the cytoplasm. Its subcellular location is the nucleus. The catalysed reaction is Thiol-dependent hydrolysis of ester, thioester, amide, peptide and isopeptide bonds formed by the C-terminal Gly of ubiquitin (a 76-residue protein attached to proteins as an intracellular targeting signal).. Activated by ADRM1. Inhibited by interaction with NFRKB. Its function is as follows. Protease that specifically cleaves 'Lys-48'-linked polyubiquitin chains. Deubiquitinating enzyme associated with the 19S regulatory subunit of the 26S proteasome. Putative regulatory component of the INO80 complex; however is inactive in the INO80 complex and is activated by a transient interaction of the INO80 complex with the proteasome via ADRM1. The polypeptide is Ubiquitin carboxyl-terminal hydrolase isozyme L5 (UCHL5) (Homo sapiens (Human)).